A 240-amino-acid polypeptide reads, in one-letter code: Serine protease SplB (240 aa).

Residues 1–36 (MNKNVVIKSLATLTILTSVTGIGTTLVEEVQQTAKA) form the signal peptide. Active-site charge relay system residues include H75, D113, and S193.

This sequence belongs to the peptidase S1B family.

It is found in the secreted. In terms of biological role, serine protease that cleaves specifically after the sequence Trp-Glu-Leu-Gln. This Staphylococcus aureus (strain Mu3 / ATCC 700698) protein is Serine protease SplB (splB).